An 89-amino-acid polypeptide reads, in one-letter code: HssA/B-like protein 14 (89 aa).

This sequence belongs to the hssA/B family.

The protein is HssA/B-like protein 14 (hssl14) of Dictyostelium discoideum (Social amoeba).